A 54-amino-acid polypeptide reads, in one-letter code: Large ribosomal subunit protein bL32c (54 aa).

Basic residues predominate over residues 1–20; that stretch reads MAVPKKRVSKSKRDMRKTTW. The interval 1 to 54 is disordered; it reads MAVPKKRVSKSKRDMRKTTWKNKASKEAKKALSLAKSVSTGKSKSKGFQIKSSN. Residues 31–42 are compositionally biased toward low complexity; the sequence is ALSLAKSVSTGK.

It belongs to the bacterial ribosomal protein bL32 family.

Its subcellular location is the plastid. The protein resides in the chloroplast. The sequence is that of Large ribosomal subunit protein bL32c from Chlorokybus atmophyticus (Soil alga).